The chain runs to 151 residues: Transcriptional regulator MraZ (151 aa).

SpoVT-AbrB domains are found at residues 7–53 and 82–125; these read EYDC…SQTE and INEV…SPDL.

Belongs to the MraZ family. Forms oligomers.

It is found in the cytoplasm. The protein localises to the nucleoid. This Cytophaga hutchinsonii (strain ATCC 33406 / DSM 1761 / CIP 103989 / NBRC 15051 / NCIMB 9469 / D465) protein is Transcriptional regulator MraZ.